A 227-amino-acid chain; its full sequence is ATP synthase F(0) complex subunit a (227 aa).

Helical transmembrane passes span 14 to 34 (LLGIPLILLSLLFPTLLLPSP), 69 to 89 (WALILTSLMTFLLLINLLGLL), 98 to 118 (QLSMNMALAFPLWLATLLTGL), 139 to 159 (IPALILIETTSLLIRPLALGV), 174 to 194 (LISTATLALLPTMPTISVLTA), and 196 to 216 (VLLLLTILELAVAMIQAYVFV).

This sequence belongs to the ATPase A chain family. In terms of assembly, component of the ATP synthase complex composed at least of ATP5F1A/subunit alpha, ATP5F1B/subunit beta, ATP5MC1/subunit c (homooctomer), MT-ATP6/subunit a, MT-ATP8/subunit 8, ATP5ME/subunit e, ATP5MF/subunit f, ATP5MG/subunit g, ATP5MK/subunit k, ATP5MJ/subunit j, ATP5F1C/subunit gamma, ATP5F1D/subunit delta, ATP5F1E/subunit epsilon, ATP5PF/subunit F6, ATP5PB/subunit b, ATP5PD/subunit d, ATP5PO/subunit OSCP. ATP synthase complex consists of a soluble F(1) head domain (subunits alpha(3) and beta(3)) - the catalytic core - and a membrane F(0) domain - the membrane proton channel (subunits c, a, 8, e, f, g, k and j). These two domains are linked by a central stalk (subunits gamma, delta, and epsilon) rotating inside the F1 region and a stationary peripheral stalk (subunits F6, b, d, and OSCP). Interacts with DNAJC30; interaction is direct.

It is found in the mitochondrion inner membrane. The enzyme catalyses H(+)(in) = H(+)(out). In terms of biological role, subunit a, of the mitochondrial membrane ATP synthase complex (F(1)F(0) ATP synthase or Complex V) that produces ATP from ADP in the presence of a proton gradient across the membrane which is generated by electron transport complexes of the respiratory chain. ATP synthase complex consist of a soluble F(1) head domain - the catalytic core - and a membrane F(1) domain - the membrane proton channel. These two domains are linked by a central stalk rotating inside the F(1) region and a stationary peripheral stalk. During catalysis, ATP synthesis in the catalytic domain of F(1) is coupled via a rotary mechanism of the central stalk subunits to proton translocation. With the subunit c (ATP5MC1), forms the proton-conducting channel in the F(0) domain, that contains two crucial half-channels (inlet and outlet) that facilitate proton movement from the mitochondrial intermembrane space (IMS) into the matrix. Protons are taken up via the inlet half-channel and released through the outlet half-channel, following a Grotthuss mechanism. The protein is ATP synthase F(0) complex subunit a of Struthio camelus (Common ostrich).